A 143-amino-acid chain; its full sequence is Transcriptional regulator MraZ (143 aa).

2 consecutive SpoVT-AbrB domains span residues 5-47 (TFTP…PRNV) and 76-119 (ADEQ…NAES).

The protein belongs to the MraZ family. In terms of assembly, forms oligomers.

It localises to the cytoplasm. The protein localises to the nucleoid. The chain is Transcriptional regulator MraZ from Corynebacterium kroppenstedtii (strain DSM 44385 / JCM 11950 / CIP 105744 / CCUG 35717).